Reading from the N-terminus, the 516-residue chain is MEFSTKALDWSKAGQNGFLATKTDCLVVGLFEGQNLGGVAKALDVATKGLVGRLVKQGDFEGKRGTHLMLHEVAGVGAARVLLVGLGKEADFTDKAFADAVRTAVRALSSTRATSALWCLAQQAPQQRDVSWAVITTITLVREAGYRLLERHPGLKRANAQNAASGKPNGNDKSSLRKVVIAVDSGDARAATQAAVRGTAIANGMELTRDLGNLPSNICTPTYLANTARSIAKRHKLKAEILGRKQIEALNMGAFLAVTKGSAEPPQFIVLRYDGGGARQAPVVLVGKGITFDTGGISLKPGEGMDEMKYDMCGAASVLGTIQAVAEMGLKLNVVAVVPTCENMPSGVATKPGDVVTSMSGQTIEILNTDAEGRLILCDALTYVERFKPAAVIDVATLTGACIIALGHVNSGLYARSDALADALLQAGRRAMDTAWRMPLDDEYQDQLKSNFADMGNIGGRPAGSVTAACFLARFTEKYDWAHLDIAGTAWKSGAAKGATGRPVPLLTQFLMDRAA.

Mn(2+) contacts are provided by Lys288 and Asp293. Lys300 is a catalytic residue. Positions 311, 370, and 372 each coordinate Mn(2+). Residue Arg374 is part of the active site.

The protein belongs to the peptidase M17 family. The cofactor is Mn(2+).

It is found in the cytoplasm. The enzyme catalyses Release of an N-terminal amino acid, Xaa-|-Yaa-, in which Xaa is preferably Leu, but may be other amino acids including Pro although not Arg or Lys, and Yaa may be Pro. Amino acid amides and methyl esters are also readily hydrolyzed, but rates on arylamides are exceedingly low.. It catalyses the reaction Release of an N-terminal amino acid, preferentially leucine, but not glutamic or aspartic acids.. In terms of biological role, presumably involved in the processing and regular turnover of intracellular proteins. Catalyzes the removal of unsubstituted N-terminal amino acids from various peptides. The sequence is that of Probable cytosol aminopeptidase from Cupriavidus taiwanensis (strain DSM 17343 / BCRC 17206 / CCUG 44338 / CIP 107171 / LMG 19424 / R1) (Ralstonia taiwanensis (strain LMG 19424)).